Consider the following 156-residue polypeptide: uncharacterized protein (156 aa).

Over residues 1 to 12 the composition is skewed to polar residues; that stretch reads MSSRFARSNGNP. The disordered stretch occupies residues 1-27; sequence MSSRFARSNGNPNHIRKRNHSPDPIGI. The residue at position 21 (S21) is a Phosphoserine.

The protein localises to the cytoplasm. The protein resides in the nucleus. This is an uncharacterized protein from Saccharomyces cerevisiae (strain ATCC 204508 / S288c) (Baker's yeast).